Here is a 240-residue protein sequence, read N- to C-terminus: Aquaporin SIP1-1 (240 aa).

Transmembrane regions (helical) follow at residues 13-33 and 44-64; these read LMTF…AAII and APLV…TVIF. Positions 70 to 72 match the NPA 1 motif; sequence NPT. 3 consecutive transmembrane segments (helical) span residues 89–109, 132–152, and 163–183; these read SLAI…LAIM, GAIA…LIIL, and FLLA…TGPA. The NPA 2 signature appears at 185 to 187; that stretch reads NPA. A helical membrane pass occupies residues 203–223; sequence DHIYVYWISSFVGALSAALLF.

It belongs to the MIP/aquaporin (TC 1.A.8) family. SIP (TC 1.A.8.10) subfamily. Expressed in roots and above ground. Expressed in elongating regions of the root tips, trichome cells of the rosette leaves, vascular tissues of the flower petals, stigma, stamens (anthers and filaments), pollen and the top and bottom (receptacle) of siliques.

It localises to the endoplasmic reticulum membrane. In terms of biological role, water channel required to facilitate the transport of water across cell membrane. This chain is Aquaporin SIP1-1 (SIP1-1), found in Arabidopsis thaliana (Mouse-ear cress).